A 217-amino-acid polypeptide reads, in one-letter code: Probable cutinase 3 (217 aa).

A signal peptide spans 1–17 (MSLRSLFVAGLATLALA). 2 disulfide bridges follow: cysteine 39–cysteine 118 and cysteine 65–cysteine 79. The Nucleophile role is filled by serine 129. Cysteine 180 and cysteine 187 are disulfide-bonded. Residue aspartate 184 is part of the active site. Residue histidine 197 is the Proton donor/acceptor of the active site.

This sequence belongs to the cutinase family.

The protein resides in the secreted. The catalysed reaction is cutin + H2O = cutin monomers.. Catalyzes the hydrolysis of complex carboxylic polyesters found in the cell wall of plants. Degrades cutin, a macromolecule that forms the structure of the plant cuticle. The sequence is that of Probable cutinase 3 from Neosartorya fischeri (strain ATCC 1020 / DSM 3700 / CBS 544.65 / FGSC A1164 / JCM 1740 / NRRL 181 / WB 181) (Aspergillus fischerianus).